Consider the following 710-residue polypeptide: Putative membrane protein IgaA homolog (710 aa).

A topological domain (periplasmic) is located at residue M1. Residues 2 to 22 (STILIFIAALLACSLLAIWRF) form a helical membrane-spanning segment. Residues 23–204 (RVKSRRGSLP…YALSRPAGLR (182 aa)) lie on the Cytoplasmic side of the membrane. 2 helical membrane passes run 205-225 (EALL…TPDV) and 226-246 (FVPW…WGLF). At 247 to 339 (APPSKSALRE…KNFPLQHWLR (93 aa)) the chain is on the cytoplasmic side. The chain crosses the membrane as a helical span at residues 340–360 (STVIAIGSLLVLFMLLFWIPL). Residues 361-656 (DMPIKFTLSW…PDKSGWWRYL (296 aa)) are Periplasmic-facing. A helical transmembrane segment spans residues 657–677 (GTTLLMLAMIVSAVYNGIQAF). Residues 678 to 710 (RRYQRHRTRMADIQEYYESCLNPRLTVSPENLI) are Cytoplasmic-facing.

Belongs to the IgaA family.

It localises to the cell inner membrane. The polypeptide is Putative membrane protein IgaA homolog (yrfF) (Salmonella typhi).